Reading from the N-terminus, the 436-residue chain is Adenylosuccinate synthetase (436 aa).

Residues 13–19 and 41–43 each bind GTP; these read GDEGKGK and GHT. Residue Asp14 is the Proton acceptor of the active site. The Mg(2+) site is built by Asp14 and Gly41. IMP-binding positions include 14-17, 39-42, Thr131, Arg145, Gln226, Thr241, and Arg309; these read DEGK and NAGH. The active-site Proton donor is His42. 305-311 provides a ligand contact to substrate; the sequence is TVTGRKR. Residues Arg311, 337-339, and 419-421 contribute to the GTP site; these read KLD and STG.

It belongs to the adenylosuccinate synthetase family. Homodimer. The cofactor is Mg(2+).

The protein localises to the cytoplasm. It catalyses the reaction IMP + L-aspartate + GTP = N(6)-(1,2-dicarboxyethyl)-AMP + GDP + phosphate + 2 H(+). Its pathway is purine metabolism; AMP biosynthesis via de novo pathway; AMP from IMP: step 1/2. Its function is as follows. Plays an important role in the de novo pathway of purine nucleotide biosynthesis. Catalyzes the first committed step in the biosynthesis of AMP from IMP. This is Adenylosuccinate synthetase from Aromatoleum aromaticum (strain DSM 19018 / LMG 30748 / EbN1) (Azoarcus sp. (strain EbN1)).